The primary structure comprises 347 residues: MRIEQELKLGFKDVLFRPKRSTLKSRSQVELTREFTFKHSGRQWSGTPVIAANMDSVGSFAMAKALSEHGVMTAIHKHYTVEDWAGFVKENDASVLNNSMVSTGTSDADFQKTKDIMALTDDLIFICVDIANGYSEHLVQYVEKVRAEFPDKVISAGNVVTGDMVEELILAGADIVKVGIGPGSVCTTRVKTGVGYPQLSAIIECADAAHGLGGRIIGDGGCSCAGDVSKAFGGGADFVMLGGMLAGHEESGGEVIEQDGKQFMKFYGMSSQSAMDKHSGGVAKYRAAEGKTVLLPYRGSVHTTISDILGGVRSTCTYVGAAKLRELTKRTTFIRVQEQENNVYGKE.

NADP(+) is bound at residue A108–A131. The K(+) site is built by G181 and G183. The active-site Thioimidate intermediate is the C186. NADP(+) is bound at residue I216–V239.

Belongs to the IMPDH/GMPR family. GuaC type 1 subfamily. Homotetramer.

The enzyme catalyses IMP + NH4(+) + NADP(+) = GMP + NADPH + 2 H(+). Functionally, catalyzes the irreversible NADPH-dependent deamination of GMP to IMP. It functions in the conversion of nucleobase, nucleoside and nucleotide derivatives of G to A nucleotides, and in maintaining the intracellular balance of A and G nucleotides. The sequence is that of GMP reductase from Aliivibrio salmonicida (strain LFI1238) (Vibrio salmonicida (strain LFI1238)).